The primary structure comprises 171 residues: MDGSAHLRDPPGPAVLRWRLEDMHIIPGTSGSLALRICQFSAAIVSFSVMISAANFSSVTAFCFLVAAMVLQCMWSLSVATIEGYAMLVGRSLRDSPLLSLFAVGDWVTAVITFAGACASAGIAVLVGRDIHRGCDVNFCGRYAAAAGMAFLSWLLISTSFLFTFWLLATR.

The Cytoplasmic segment spans residues 1–39 (MDGSAHLRDPPGPAVLRWRLEDMHIIPGTSGSLALRICQ). A helical membrane pass occupies residues 40–60 (FSAAIVSFSVMISAANFSSVT). Residue A61 is a topological domain, extracellular. Residues 62–82 (FCFLVAAMVLQCMWSLSVATI) form a helical membrane-spanning segment. The Cytoplasmic portion of the chain corresponds to 83–106 (EGYAMLVGRSLRDSPLLSLFAVGD). Residues 107-127 (WVTAVITFAGACASAGIAVLV) form a helical membrane-spanning segment. Topologically, residues 128 to 148 (GRDIHRGCDVNFCGRYAAAAG) are extracellular. A helical transmembrane segment spans residues 149-169 (MAFLSWLLISTSFLFTFWLLA). The Cytoplasmic segment spans residues 170 to 171 (TR).

This sequence belongs to the Casparian strip membrane proteins (CASP) family. Homodimer and heterodimers.

The protein localises to the cell membrane. This is CASP-like protein 5A2 from Pteridium aquilinum subsp. aquilinum (Bracken fern).